The following is a 98-amino-acid chain: NADH-ubiquinone oxidoreductase chain 4L (98 aa).

The next 3 helical transmembrane spans lie at 1 to 21 (MNLIDLILIAIYVIGISGLIF), 26 to 46 (IINILIISELNLGTLGMLFVL), and 61 to 81 (LYILTFTAAESAIGLAIVVIL).

Belongs to the complex I subunit 4L family.

It localises to the mitochondrion membrane. It carries out the reaction a ubiquinone + NADH + 5 H(+)(in) = a ubiquinol + NAD(+) + 4 H(+)(out). Core subunit of the mitochondrial membrane respiratory chain NADH dehydrogenase (Complex I) that is believed to belong to the minimal assembly required for catalysis. Complex I functions in the transfer of electrons from NADH to the respiratory chain. The immediate electron acceptor for the enzyme is believed to be ubiquinone. This chain is NADH-ubiquinone oxidoreductase chain 4L (nad4L), found in Dictyostelium citrinum (Slime mold).